A 277-amino-acid chain; its full sequence is R-spondin-3 (277 aa).

A signal peptide spans 1–21 (MHLRLISCFFIILNFMEYIGS). 2 FU repeats span residues 35–86 (PNVS…GYYG) and 92–135 (INKC…GLEA). Asn-36 carries an N-linked (GlcNAc...) asparagine glycan. Disulfide bonds link Cys-41-Cys-48, Cys-45-Cys-54, Cys-57-Cys-76, Cys-80-Cys-95, Cys-98-Cys-105, Cys-102-Cys-111, Cys-114-Cys-125, Cys-129-Cys-142, Cys-148-Cys-190, Cys-159-Cys-166, and Cys-199-Cys-206. One can recognise a TSP type-1 domain in the interval 147–207 (HCEASEWSPW…TCIVQRKKCS (61 aa)). Residues 210–277 (ERGKKGRERK…QKSVSVSTVH (68 aa)) are disordered. The segment covering 213–223 (KKGRERKRKKL) has biased composition (basic residues). A compositionally biased stretch (low complexity) spans 232-245 (SSSSDSKGLESSIE).

Belongs to the R-spondin family. In terms of assembly, interacts with the extracellular domain of FZD8 and LRP6. It however does not form a ternary complex with FZD8 and LRP6. Interacts with WNT1. Binds heparin. Interacts with LGR4, LGR5 and LGR6. In terms of tissue distribution, highly expressed in endothelial cells.

Its subcellular location is the secreted. Its function is as follows. Activator of the canonical Wnt signaling pathway by acting as a ligand for LGR4-6 receptors, which acts as a key regulator of angiogenesis. Upon binding to LGR4-6 (LGR4, LGR5 or LGR6), LGR4-6 associate with phosphorylated LRP6 and frizzled receptors that are activated by extracellular Wnt receptors, triggering the canonical Wnt signaling pathway to increase expression of target genes. Also regulates the canonical Wnt/beta-catenin-dependent pathway and non-canonical Wnt signaling by acting as an inhibitor of ZNRF3, an important regulator of the Wnt signaling pathway. Acts as a ligand for frizzled FZD8 and LRP6. May negatively regulate the TGF-beta pathway. Acts as a key regulator of angiogenesis by controlling vascular stability and pruning: acts by activating the non-canonical Wnt signaling pathway in endothelial cells. Can also amplify Wnt signaling pathway independently of LGR4-6 receptors, possibly by acting as a direct antagonistic ligand to RNF43 and ZNRF3. This is R-spondin-3 (Rspo3) from Mus musculus (Mouse).